Here is a 384-residue protein sequence, read N- to C-terminus: uncharacterized protein (384 aa).

A disordered region spans residues 1-116; the sequence is MTEMPKKKFS…FPAAPPPMDS (116 aa). Composition is skewed to basic and acidic residues over residues 14–70 and 78–95; these read ARGD…RAGD and RFKDKDRDKPRYGDDRPR. The S-adenosyl-L-methionine site is built by Gly-318, Ile-338, and Leu-347.

The protein belongs to the class IV-like SAM-binding methyltransferase superfamily. RNA methyltransferase TrmH family.

This is an uncharacterized protein from Synechocystis sp. (strain ATCC 27184 / PCC 6803 / Kazusa).